The following is a 449-amino-acid chain: Glutamate--tRNA ligase (449 aa).

The short motif at 10–20 (PSPTGHLHIGN) is the 'HIGH' region element. Positions 214 to 218 (KLSKR) match the 'KMSKS' region motif. ATP is bound at residue Lys-217.

The protein belongs to the class-I aminoacyl-tRNA synthetase family. Glutamate--tRNA ligase type 1 subfamily. Monomer.

It localises to the cytoplasm. It catalyses the reaction tRNA(Glu) + L-glutamate + ATP = L-glutamyl-tRNA(Glu) + AMP + diphosphate. Functionally, catalyzes the attachment of glutamate to tRNA(Glu) in a two-step reaction: glutamate is first activated by ATP to form Glu-AMP and then transferred to the acceptor end of tRNA(Glu). This Acholeplasma laidlawii (strain PG-8A) protein is Glutamate--tRNA ligase.